Reading from the N-terminus, the 209-residue chain is Uracil phosphoribosyltransferase (209 aa).

5-phospho-alpha-D-ribose 1-diphosphate contacts are provided by residues Arg79, Arg104, and 131–139; that span reads DPMLATGGS. Uracil-binding positions include Ile194 and 199–201; that span reads GDA. Asp200 contacts 5-phospho-alpha-D-ribose 1-diphosphate.

It belongs to the UPRTase family. Mg(2+) serves as cofactor.

It catalyses the reaction UMP + diphosphate = 5-phospho-alpha-D-ribose 1-diphosphate + uracil. The protein operates within pyrimidine metabolism; UMP biosynthesis via salvage pathway; UMP from uracil: step 1/1. Allosterically activated by GTP. In terms of biological role, catalyzes the conversion of uracil and 5-phospho-alpha-D-ribose 1-diphosphate (PRPP) to UMP and diphosphate. This Streptococcus sanguinis (strain SK36) protein is Uracil phosphoribosyltransferase.